The chain runs to 1904 residues: Fatty acid synthase beta subunit hexB (1904 aa).

Residues 24-395 (LSVAFGGQGP…TEGTGVRVIQ (372 aa)) are acetyltransferase (AT) domain. The tract at residues 447–691 (TQLLNAPPVM…LIVQTEGVGD (245 aa)) is enoyl reductase (ER) domain. Positions 1001–1491 (GPAADCWTHH…RPNDRLKIQL (491 aa)) are dehydratase (DH) domain. Residues 1399 to 1512 (PGWNEGSTVL…MKVQAFNDET (114 aa)) enclose the MaoC-like domain. Residues 1530 to 1893 (YVFCGQGSQE…IEHVQSVTGS (364 aa)) form a malonyl/palmitoyl transferase (MT/PT) domain region.

Belongs to the fungal fatty acid synthetase subunit beta family. [Alpha(6)beta(6)] hexamers of two multifunctional subunits (alpha and beta).

It catalyses the reaction acetyl-CoA + n malonyl-CoA + 2n NADPH + 4n H(+) = a long-chain-acyl-CoA + n CoA + n CO2 + 2n NADP(+).. The enzyme catalyses holo-[ACP] + acetyl-CoA = acetyl-[ACP] + CoA. The catalysed reaction is holo-[ACP] + malonyl-CoA = malonyl-[ACP] + CoA. It carries out the reaction a (3R)-hydroxyacyl-[ACP] = a (2E)-enoyl-[ACP] + H2O. It catalyses the reaction a 2,3-saturated acyl-[ACP] + NAD(+) = a (2E)-enoyl-[ACP] + NADH + H(+). The enzyme catalyses (9Z)-octadecenoyl-[ACP] + H2O = (9Z)-octadecenoate + holo-[ACP] + H(+). It participates in mycotoxin biosynthesis. In terms of biological role, fatty acid synthase beta subunit; part of the fragmented gene cluster that mediates the biosynthesis of dothistromin (DOTH), a polyketide toxin very similar in structure to the aflatoxin precursor, versicolorin B. The first step of the pathway is the conversion of acetate to norsolorinic acid (NOR) and requires the fatty acid synthase subunits hexA and hexB, as well as the polyketide synthase pksA. PksA combines a hexanoyl starter unit and 7 malonyl-CoA extender units to synthesize the precursor NOR. The hexanoyl starter unit is provided to the acyl-carrier protein (ACP) domain by the fungal fatty acid synthase hexA/hexB. The second step is the conversion of NOR to averantin (AVN) and requires the norsolorinic acid ketoreductase nor1, which catalyzes the dehydration of norsolorinic acid to form (1'S)-averantin. The cytochrome P450 monooxygenase avnA then catalyzes the hydroxylation of AVN to 5'hydroxyaverantin (HAVN). The next step is performed by adhA that transforms HAVN to averufin (AVF). Averufin might then be converted to hydroxyversicolorone by cypX and avfA. Hydroxyversicolorone is further converted versiconal hemiacetal acetate (VHA) by moxY. VHA is then the substrate for the versiconal hemiacetal acetate esterase est1 to yield versiconal (VAL). Versicolorin B synthase vbsA then converts VAL to versicolorin B (VERB) by closing the bisfuran ring. Then, the activity of the versicolorin B desaturase verB leads to versicolorin A (VERA). DotB, a predicted chloroperoxidase, may perform epoxidation of the A-ring of VERA. Alternatively, a cytochrome P450, such as cypX or avnA could catalyze this step. It is also possible that another, uncharacterized, cytochrome P450 enzyme is responsible for this step. Opening of the epoxide could potentially be achieved by the epoxide hydrolase epoA. However, epoA seems not to be required for DOTH biosynthesis, but other epoxide hydrolases may have the ability to complement this hydrolysis. Alternatively, opening of the epoxide ring could be achieved non-enzymatically. The next step is the deoxygenation of ring A to yield the 5,8-dihydroxyanthraquinone which is most likely catalyzed by the NADPH dehydrogenase encoded by ver1. The last stages of DOTH biosynthesis are proposed to involve hydroxylation of the bisfuran. OrdB and norB might have oxidative roles here. An alternative possibility is that cytochrome P450 monoogenases such as avnA and cypX might perform these steps in addition to previously proposed steps. The sequence is that of Fatty acid synthase beta subunit hexB from Dothistroma septosporum (strain NZE10 / CBS 128990) (Red band needle blight fungus).